We begin with the raw amino-acid sequence, 70 residues long: Sec-independent protein translocase protein TatA (70 aa).

A helical membrane pass occupies residues 1 to 21 (MGSFSVWHWLIVLVIVLVLFG). Residues 42–70 (GMADEDQTPPPADANANAKTVDHKADEIK) are disordered. Over residues 61-70 (TVDHKADEIK) the composition is skewed to basic and acidic residues.

This sequence belongs to the TatA/E family. In terms of assembly, the Tat system comprises two distinct complexes: a TatABC complex, containing multiple copies of TatA, TatB and TatC subunits, and a separate TatA complex, containing only TatA subunits. Substrates initially bind to the TatABC complex, which probably triggers association of the separate TatA complex to form the active translocon.

The protein resides in the cell inner membrane. In terms of biological role, part of the twin-arginine translocation (Tat) system that transports large folded proteins containing a characteristic twin-arginine motif in their signal peptide across membranes. TatA could form the protein-conducting channel of the Tat system. In Agrobacterium fabrum (strain C58 / ATCC 33970) (Agrobacterium tumefaciens (strain C58)), this protein is Sec-independent protein translocase protein TatA.